Here is a 536-residue protein sequence, read N- to C-terminus: Pre-mRNA 3'-end-processing factor FIP1 (536 aa).

Composition is skewed to basic and acidic residues over residues 1 to 10 and 32 to 42; these read MSAGEVERLV and VHVHSDLAKDL. Disordered stretches follow at residues 1 to 95, 212 to 246, and 300 to 536; these read MSAG…EDDV, VQQG…GLPP, and FPPG…APAE. The sufficient for interaction with PAPOLA stretch occupies residues 1-110; sequence MSAGEVERLV…DIKTGAPQYG (110 aa). Residues 1–296 are necessary for stimulating PAPOLA activity; it reads MSAGEVERLV…TEVDNNFSKP (296 aa). Acidic residues-rich tracts occupy residues 43 to 54 and 80 to 94; these read DENEVERPEEEN and TEDD…DEDD. Phosphoserine occurs at positions 84, 86, and 88. The sufficient for interaction with CPSF4 stretch occupies residues 136 to 219; the sequence is KGVDLDAPGS…ITVQQGRTGN (84 aa). Over residues 300–344 the composition is skewed to pro residues; it reads FPPGAPPTHLPPPPFLPPPPTVSTAPPLIPPPGFPPPPGAPPPSL. The residue at position 366 (Tyr-366) is a Phosphotyrosine. Residues 374 to 390 are compositionally biased toward polar residues; that stretch reads LTSSAPSWPSLVDTTKQ. The tract at residues 383-536 is sufficient for interaction with CPSF1 and CSTF3; the sequence is SLVDTTKQWD…QESTEAAPAE (154 aa). Residues 394–434 are compositionally biased toward basic and acidic residues; sequence YARREKDRDRDRERDRDRERERDRDRERERTRERERERDHS. The interval 397–432 is arg/Asp/Glu-rich domain; it reads REKDRDRDRERDRDRERERDRDRERERTRERERERD. Ser-434 bears the Phosphoserine mark. The residue at position 436 (Thr-436) is a Phosphothreonine. Phosphoserine is present on residues Ser-438 and Ser-442. Over residues 443–470 the composition is skewed to basic and acidic residues; that stretch reads DEERYRYREYAERGYERHRASREKEERH. Over residues 484-493 the composition is skewed to basic residues; it reads KSSRSNSRRR. At Ser-496 the chain carries Phosphoserine. A compositionally biased stretch (basic residues) spans 502–512; it reads HRRHKHKKSKR.

This sequence belongs to the FIP1 family. Component of the cleavage and polyadenylation specificity factor (CPSF) complex, composed of CPSF1, CPSF2, CPSF3, CPSF4 and FIP1L1. Found in a complex with CPSF1, FIP1L1 and PAPOLA. Interacts with CPSF1, CPSF4, CSTF2 and CSTF3. Interacts with AHCYL1 (when phosphorylated); the interaction is direct and associates AHCYL1 with the CPSF complex and RNA. Interacts with PAPOLA; the interaction seems to be increased by the interaction with AHCYL1. Interacts with NUDT21/CPSF5; this interaction occurs in a RNA sequence-specific manner. Interacts (preferentially via unphosphorylated form and Arg/Glu/Asp-rich domain) with CPSF6 (via Arg/Ser-rich domain); this interaction mediates, at least in part, the interaction between the CFIm and CPSF complexes and may be inhibited by CPSF6 hyper-phosphorylation. Interacts (preferentially via unphosphorylated form and Arg/Asp/Glu-rich domain) with CPSF7 (via Arg/Ser-rich domain); this interaction mediates, at least in part, the interaction between the CFIm and CPSF complexes and may be inhibited by CPSF7 hyper-phosphorylation.

It is found in the nucleus. Its function is as follows. Component of the cleavage and polyadenylation specificity factor (CPSF) complex that plays a key role in pre-mRNA 3'-end formation, recognizing the AAUAAA signal sequence and interacting with poly(A) polymerase and other factors to bring about cleavage and poly(A) addition. FIP1L1 contributes to poly(A) site recognition and stimulates poly(A) addition. Binds to U-rich RNA sequence elements surrounding the poly(A) site. May act to tether poly(A) polymerase to the CPSF complex. This chain is Pre-mRNA 3'-end-processing factor FIP1 (Fip1l1), found in Rattus norvegicus (Rat).